Here is a 159-residue protein sequence, read N- to C-terminus: Protein hunchback (159 aa).

Over residues 18 to 34 (HNHHHHHHHGHHQHQQR) the composition is skewed to basic residues. Disordered regions lie at residues 18–49 (HNHHHHHHHGHHQHQQRHNSNSNASSPHQSPL) and 119–159 (LTPP…KYMA). The segment covering 140–159 (EPEKEHDLMSNSSEDMKYMA) has biased composition (basic and acidic residues).

It belongs to the hunchback C2H2-type zinc-finger protein family.

It is found in the nucleus. Its function is as follows. Gap class segmentation protein that controls development of head structures. In Drosophila soonae (Fruit fly), this protein is Protein hunchback (hb).